A 280-amino-acid polypeptide reads, in one-letter code: Urease accessory protein UreD (280 aa).

The protein belongs to the UreD family. In terms of assembly, ureD, UreF and UreG form a complex that acts as a GTP-hydrolysis-dependent molecular chaperone, activating the urease apoprotein by helping to assemble the nickel containing metallocenter of UreC. The UreE protein probably delivers the nickel.

It is found in the cytoplasm. In terms of biological role, required for maturation of urease via the functional incorporation of the urease nickel metallocenter. This Staphylococcus saprophyticus subsp. saprophyticus (strain ATCC 15305 / DSM 20229 / NCIMB 8711 / NCTC 7292 / S-41) protein is Urease accessory protein UreD.